The chain runs to 192 residues: Ion-translocating oxidoreductase complex subunit A (192 aa).

6 helical membrane-spanning segments follow: residues Leu-5–Leu-25, Ile-39–Val-59, Leu-65–Val-85, Ala-102–Leu-122, Ala-134–Met-154, and Ala-171–Val-191.

It belongs to the NqrDE/RnfAE family. As to quaternary structure, the complex is composed of six subunits: RnfA, RnfB, RnfC, RnfD, RnfE and RnfG.

Its subcellular location is the cell inner membrane. Functionally, part of a membrane-bound complex that couples electron transfer with translocation of ions across the membrane. This Shewanella putrefaciens (strain CN-32 / ATCC BAA-453) protein is Ion-translocating oxidoreductase complex subunit A.